A 202-amino-acid polypeptide reads, in one-letter code: Small ribosomal subunit protein uS4c (202 aa).

Residues 90-165 form the S4 RNA-binding domain; the sequence is MRLDNILFRL…SQKYKIPNHL (76 aa).

It belongs to the universal ribosomal protein uS4 family. In terms of assembly, part of the 30S ribosomal subunit. Contacts protein S5. The interaction surface between S4 and S5 is involved in control of translational fidelity.

Its subcellular location is the plastid. It is found in the chloroplast. In terms of biological role, one of the primary rRNA binding proteins, it binds directly to 16S rRNA where it nucleates assembly of the body of the 30S subunit. With S5 and S12 plays an important role in translational accuracy. The polypeptide is Small ribosomal subunit protein uS4c (rps4) (Diphyscium foliosum (Nut-moss)).